Consider the following 39-residue polypeptide: Potassium channel toxin alpha-KTx 31.1 (39 aa).

Cystine bridges form between Cys7-Cys30, Cys13-Cys35, and Cys17-Cys37.

This sequence belongs to the short scorpion toxin superfamily. Potassium channel inhibitor family. Alpha-KTx 31 subfamily. As to expression, expressed by the venom gland.

Its subcellular location is the secreted. Voltage-gated potassium channel inhibitor. 1 uM of the native toxin inhibits rat Kv1.2/KCNA2 (100% inhibition), and drosophila Shaker IR/Sh (100%), human Kv1.3/KCNA3 (83%), rat Kv1.1/KCNA1 (32%) and rat Kv1.6/KCNA6 (21%). This is Potassium channel toxin alpha-KTx 31.1 from Buthus occitanus tunetanus (Common European scorpion).